A 199-amino-acid chain; its full sequence is Probable molybdenum cofactor guanylyltransferase (199 aa).

Residues 8–10, Lys20, Asp65, and Asp96 each bind GTP; that span reads LAG. Mg(2+) is bound at residue Asp96.

The protein belongs to the MobA family. The cofactor is Mg(2+).

The protein resides in the cytoplasm. The enzyme catalyses Mo-molybdopterin + GTP + H(+) = Mo-molybdopterin guanine dinucleotide + diphosphate. Its function is as follows. Transfers a GMP moiety from GTP to Mo-molybdopterin (Mo-MPT) cofactor (Moco or molybdenum cofactor) to form Mo-molybdopterin guanine dinucleotide (Mo-MGD) cofactor. This chain is Probable molybdenum cofactor guanylyltransferase, found in Bacillus subtilis (strain 168).